Reading from the N-terminus, the 216-residue chain is RNA chaperone ProQ (216 aa).

A compositionally biased stretch (basic and acidic residues) spans Glu-105–Lys-115. The segment at Glu-105–Lys-159 is disordered.

This sequence belongs to the ProQ family.

It is found in the cytoplasm. Functionally, RNA chaperone with significant RNA binding, RNA strand exchange and RNA duplexing activities. This Pseudoalteromonas atlantica (strain T6c / ATCC BAA-1087) protein is RNA chaperone ProQ.